The chain runs to 350 residues: Heat-inducible transcription repressor HrcA (350 aa).

It belongs to the HrcA family.

Negative regulator of class I heat shock genes (grpE-dnaK-dnaJ and groELS operons). Prevents heat-shock induction of these operons. The chain is Heat-inducible transcription repressor HrcA from Xanthomonas oryzae pv. oryzae (strain KACC10331 / KXO85).